We begin with the raw amino-acid sequence, 861 residues long: Seed linoleate 9S-lipoxygenase-3 (861 aa).

Residues 41–166 (QGFDILGSTV…HHKIDRIFFA (126 aa)) form the PLAT domain. Positions 169-861 (TYLPSETPAP…FRGIPNSISI (693 aa)) constitute a Lipoxygenase domain. The tract at residues 215–257 (NPDSGENHARPVLGGSETYPYPRRGRTGRKPTRKDPNSESRSD) is disordered. A compositionally biased stretch (basic residues) spans 237–246 (RRGRTGRKPT). Basic and acidic residues predominate over residues 247-257 (RKDPNSESRSD). Fe cation-binding residues include His522, His527, His713, Asn717, and Ile861.

This sequence belongs to the lipoxygenase family. The cofactor is Fe cation.

Its subcellular location is the cytoplasm. It carries out the reaction (9Z,12Z)-octadecadienoate + O2 = (9S)-hydroperoxy-(10E,12Z)-octadecadienoate. Its pathway is lipid metabolism; oxylipin biosynthesis. Its function is as follows. Plant lipoxygenase may be involved in a number of diverse aspects of plant physiology including growth and development, pest resistance, and senescence or responses to wounding. It catalyzes the hydroperoxidation of lipids containing a cis,cis-1,4-pentadiene structure. In Pisum sativum (Garden pea), this protein is Seed linoleate 9S-lipoxygenase-3 (LOX1.3).